A 450-amino-acid chain; its full sequence is Tubulin alpha-3C chain (450 aa).

The MREC motif motif lies at 1–4 (MREC). Glutamine 11 contacts GTP. Residue lysine 40 is modified to N6-acetyllysine. The GTP site is built by glutamate 71, serine 140, glycine 144, threonine 145, threonine 179, asparagine 206, and asparagine 228. Residue glutamate 71 participates in Mg(2+) binding. Glutamate 254 is a catalytic residue. Tyrosine 282 is modified (3'-nitrotyrosine). The residue at position 439 (serine 439) is a Phosphoserine. Tyrosine 450 bears the 3'-nitrotyrosine mark.

This sequence belongs to the tubulin family. In terms of assembly, dimer of alpha and beta chains. A typical microtubule is a hollow water-filled tube with an outer diameter of 25 nm and an inner diameter of 15 nM. Alpha-beta heterodimers associate head-to-tail to form protofilaments running lengthwise along the microtubule wall with the beta-tubulin subunit facing the microtubule plus end conferring a structural polarity. Microtubules usually have 13 protofilaments but different protofilament numbers can be found in some organisms and specialized cells. The cofactor is Mg(2+). Some glutamate residues at the C-terminus are polyglutamylated, resulting in polyglutamate chains on the gamma-carboxyl group. Polyglutamylation plays a key role in microtubule severing by spastin (SPAST). SPAST preferentially recognizes and acts on microtubules decorated with short polyglutamate tails: severing activity by SPAST increases as the number of glutamates per tubulin rises from one to eight, but decreases beyond this glutamylation threshold. Glutamylation is also involved in cilia motility. In terms of processing, some glutamate residues at the C-terminus are monoglycylated but not polyglycylated due to the absence of functional TTLL10 in human. Monoglycylation is mainly limited to tubulin incorporated into cilia and flagella axonemes, which is required for their stability and maintenance. Flagella glycylation controls sperm motility. Both polyglutamylation and monoglycylation can coexist on the same protein on adjacent residues, and lowering glycylation levels increases polyglutamylation, and reciprocally. Post-translationally, acetylation of alpha chains at Lys-40 is located inside the microtubule lumen. This modification has been correlated with increased microtubule stability, intracellular transport and ciliary assembly. Methylation of alpha chains at Lys-40 is found in mitotic microtubules and is required for normal mitosis and cytokinesis contributing to genomic stability. In terms of processing, nitration of Tyr-450 is irreversible and interferes with normal dynein intracellular distribution. Post-translationally, undergoes a tyrosination/detyrosination cycle, the cyclic removal and re-addition of a C-terminal tyrosine residue by the enzymes tubulin tyrosine carboxypeptidase (MATCAP1/KIAA0895L, VASH1 or VASH2) and tubulin tyrosine ligase (TTL), respectively. Tyrosination promotes microtubule interaction with CAP-Gly domain-containing proteins such as CLIP1, CLIP2 and DCTN1. Tyrosination regulates the initiation of dynein-dynactin motility via interaction with DCTN1, which brings the dynein-dynactin complex into contact with microtubules. In neurons, tyrosinated tubulins mediate the initiation of retrograde vesicle transport. In terms of processing, detyrosination is involved in metaphase plate congression by guiding chromosomes during mitosis: detyrosination promotes interaction with CENPE, promoting pole-proximal transport of chromosomes toward the equator. Detyrosination increases microtubules-dependent mechanotransduction in dystrophic cardiac and skeletal muscle. In cardiomyocytes, detyrosinated microtubules are required to resist to contractile compression during contraction: detyrosination promotes association with desmin (DES) at force-generating sarcomeres, leading to buckled microtubules and mechanical resistance to contraction. In terms of tissue distribution, expressed in testis.

The protein resides in the cytoplasm. It is found in the cytoskeleton. The catalysed reaction is GTP + H2O = GDP + phosphate + H(+). Functionally, tubulin is the major constituent of microtubules, a cylinder consisting of laterally associated linear protofilaments composed of alpha- and beta-tubulin heterodimers. Microtubules grow by the addition of GTP-tubulin dimers to the microtubule end, where a stabilizing cap forms. Below the cap, tubulin dimers are in GDP-bound state, owing to GTPase activity of alpha-tubulin. This Homo sapiens (Human) protein is Tubulin alpha-3C chain (TUBA3C).